Consider the following 168-residue polypeptide: UPF0134 protein MPN_524 (168 aa).

The protein belongs to the UPF0134 family.

This Mycoplasma pneumoniae (strain ATCC 29342 / M129 / Subtype 1) (Mycoplasmoides pneumoniae) protein is UPF0134 protein MPN_524.